The primary structure comprises 178 residues: Large ribosomal subunit protein bL19 (178 aa).

Belongs to the bacterial ribosomal protein bL19 family.

In terms of biological role, this protein is located at the 30S-50S ribosomal subunit interface and may play a role in the structure and function of the aminoacyl-tRNA binding site. The sequence is that of Large ribosomal subunit protein bL19 from Rhizobium etli (strain ATCC 51251 / DSM 11541 / JCM 21823 / NBRC 15573 / CFN 42).